The primary structure comprises 252 residues: MHAEFRTDRGRIRHHNEDNGGVFENKDNQPIVIVADGMGGHRAGDVASEMAVRLLSDAWKETTALLTAEEIETWLRKEIQEVNKQIVLYAESEMDLNGMGTTLVAAIMAKSQVVIANVGDSRGYLLQNNTLRQLTEDHSLVHELLRTGEISKEDAMNHPRKNILLRALGVEGKVEVDTFVVPFQTTDTLLLCSDGLTNMVPETEMEDILKSKRSLSEKADVFITKANSYGGEDNITVLLVERNLMQKGRDAS.

The segment covering Met1–Asp18 has biased composition (basic and acidic residues). The disordered stretch occupies residues Met1–Phe23. In terms of domain architecture, PPM-type phosphatase spans His2–Arg242. Residues Asp36, Gly37, Asp194, and Asp233 each coordinate Mn(2+).

The protein belongs to the PP2C family. Mn(2+) is required as a cofactor.

The protein resides in the cytoplasm. The protein localises to the membrane. The enzyme catalyses O-phospho-L-seryl-[protein] + H2O = L-seryl-[protein] + phosphate. The catalysed reaction is O-phospho-L-threonyl-[protein] + H2O = L-threonyl-[protein] + phosphate. Its function is as follows. Protein phosphatase that dephosphorylates EF-Tu. The polypeptide is Serine/threonine phosphatase stp (stp) (Listeria welshimeri serovar 6b (strain ATCC 35897 / DSM 20650 / CCUG 15529 / CIP 8149 / NCTC 11857 / SLCC 5334 / V8)).